The following is a 526-amino-acid chain: Vang-like protein 1 (526 aa).

A compositionally biased stretch (low complexity) spans 1 to 15 (MDTESTYSGYSYYSS). A disordered region spans residues 1–87 (MDTESTYSGY…TTAITGTSEH (87 aa)). The Cytoplasmic segment spans residues 1-114 (MDTESTYSGY…VGLDCKRYLG (114 aa)). Residues 75 to 87 (GETTTAITGTSEH) show a composition bias toward polar residues. Residues Ser-88 and Ser-90 each carry the phosphoserine modification. Residues 115-135 (LTVASFLGLLVFLTPIAFILL) form a helical membrane-spanning segment. At 136–153 (PQILWREELKPCGAICEG) the chain is on the extracellular side. Residues 154–174 (LLISVSFKLLILLIGTWALFF) traverse the membrane as a helical segment. Topologically, residues 175 to 184 (RKQRADVPRV) are cytoplasmic. A helical transmembrane segment spans residues 185 to 205 (FVFRALLLVLIFLFVVSYWLF). Topologically, residues 206 to 224 (YGVRILDSRDQNYKDIVQY) are extracellular. Residues 225-245 (AVSLVDALLFIHYLAIVLLEL) traverse the membrane as a helical segment. Topologically, residues 246 to 526 (RQLQPMFTLQ…VLRLQSETSV (281 aa)) are cytoplasmic.

It belongs to the Vang family. As to quaternary structure, heterodimer with Vangl2. Interacts through its C-terminal region with the N-terminal half of DVL1, DVL2 and DVL3. The PDZ domain of DVL1, DVL2 and DVL3 is required for the interaction.

It localises to the cell membrane. The chain is Vang-like protein 1 (Vangl1) from Mus musculus (Mouse).